A 303-amino-acid polypeptide reads, in one-letter code: Recombination-associated protein RdgC (303 aa).

It belongs to the RdgC family.

The protein localises to the cytoplasm. It localises to the nucleoid. In terms of biological role, may be involved in recombination. This is Recombination-associated protein RdgC from Aeromonas hydrophila subsp. hydrophila (strain ATCC 7966 / DSM 30187 / BCRC 13018 / CCUG 14551 / JCM 1027 / KCTC 2358 / NCIMB 9240 / NCTC 8049).